Here is a 532-residue protein sequence, read N- to C-terminus: uncharacterized protein (532 aa).

Transmembrane regions (helical) follow at residues 7-26, 30-52, 59-77, 87-109, 116-134, and 139-161; these read HSSY…LGRI, GLSL…GVII, FGLV…PGFF, LIII…KYAF, VVGL…AVAI, and SPLA…ILFV. RCK C-terminal domains follow at residues 179 to 262 and 263 to 346; these read LEIE…LVGE and REEG…LLGN. 4 helical membrane passes run 356–378, 388–410, 446–468, and 509–531; these read FFPI…SFPG, GGVL…LWSM, GLLL…AFVG, and YATV…ATVV.

This sequence belongs to the AAE transporter (TC 2.A.81) family.

It is found in the cell membrane. This is an uncharacterized protein from Bacteroides fragilis (strain YCH46).